A 740-amino-acid polypeptide reads, in one-letter code: DNA (cytosine-5)-methyltransferase 3C (740 aa).

Disordered regions lie at residues 75–99 and 248–312; these read LTGD…PVMP and FKPT…DVTN. Positions 309-441 constitute an ADD domain; that stretch reads DVTNNKGNLE…LQDFFTTDPD (133 aa). The GATA-type; atypical zinc-finger motif lies at 320-350; sequence HCLSCGRKDPVSFHPLFEGGLCQSCRDRFLE. The PHD-type; atypical zinc finger occupies 361 to 417; that stretch reads QSYCTVCCEGRELLLCSNTSCCRCFCVECLEVLVGAGTAEDVKLQEPWSCYMCLPQR. Residues 462–740 enclose the SAM-dependent MTase C5-type domain; sequence IRVLSLFDGI…APLKDHFACE (279 aa). Residues Ile-471, Thr-473, Glu-492, Asp-514, and Ile-515 each contribute to the S-adenosyl-L-methionine site. Cys-538 is an active-site residue. Residues Arg-719 and Trp-721 each coordinate S-adenosyl-L-methionine.

Belongs to the class I-like SAM-binding methyltransferase superfamily. C5-methyltransferase family. In terms of assembly, homodimer. Interacts with DNMT3L. Interacts with SPOCD1; recruiting Dnmt3C to transposons. Specifically expressed in testis.

Its subcellular location is the nucleus. The enzyme catalyses a 2'-deoxycytidine in DNA + S-adenosyl-L-methionine = a 5-methyl-2'-deoxycytidine in DNA + S-adenosyl-L-homocysteine + H(+). Its function is as follows. DNA methyltransferase that specifically methylates the promoters of evolutionarily young retrotransposons in the male germline. De novo methylation and subsequent repression of transposable elements prevents their mobilization, which is essential for germline integrity. Compared to Dnmt3a and Dnmt3b, shows lower DNA methyltransferase efficiency. The polypeptide is DNA (cytosine-5)-methyltransferase 3C (Mus musculus (Mouse)).